A 916-amino-acid chain; its full sequence is Beta-scruin (916 aa).

6 Kelch repeats span residues 82–133 (AVLI…YFHG), 134–187 (KVYL…IMDE), 188–235 (RIFV…NNEG), 237–289 (IYVV…TQNK), 291–341 (IWIW…KAGT), and 342–390 (QVFI…GIPV). Residues 393 to 426 (SPASDITTSKTTRSGSRKTQKTLKDKQQSDIHAR) form a disordered region. Basic and acidic residues predominate over residues 414–425 (TLKDKQQSDIHA). Kelch repeat units lie at residues 586–637 (VIIA…YYRG), 638–691 (AIYV…VFND), 692–739 (SIYV…SHGG), 741–793 (LWVM…VCDD), 795–847 (IWLC…ALES), and 849–896 (LYLI…TIPP).

Sperm.

May have an enzymatic role. Found the acrosomal vesicle at the anterior of sperm but not in the acrosomal process. This chain is Beta-scruin, found in Limulus polyphemus (Atlantic horseshoe crab).